A 394-amino-acid polypeptide reads, in one-letter code: Candidapepsin (394 aa).

Residues 1 to 23 form the signal peptide; the sequence is MATIFLFTKNVFIALAFALFAQG. A propeptide spans 24 to 60 (activation peptide); sequence LTIPDGIEKRTDKVVSLDFTVIRKPFNATAHRLIQKR. N-linked (GlcNAc...) asparagine glycosylation is present at Asn50. In terms of domain architecture, Peptidase A1 spans 74 to 381; sequence YAADIVVGSN…DLDDKTISLA (308 aa). Asp92 is a catalytic residue. An intrachain disulfide couples Cys107 to Cys119. Asp278 is an active-site residue. Cys314 and Cys347 are oxidised to a cystine.

The protein belongs to the peptidase A1 family. Post-translationally, O-glycosylated.

The protein resides in the secreted. The enzyme catalyses Preferential cleavage at the carboxyl of hydrophobic amino acids, but fails to cleave 15-Leu-|-Tyr-16, 16-Tyr-|-Leu-17 and 24-Phe-|-Phe-25 of insulin B chain. Activates trypsinogen, and degrades keratin.. This Candida tropicalis (Yeast) protein is Candidapepsin (SAPT1).